Here is a 203-residue protein sequence, read N- to C-terminus: Endo-type membrane-bound lytic murein transglycosylase A (203 aa).

Positions 1–15 (MKLRWLLILVVFLAG) are cleaved as a signal peptide. C16 is lipidated: N-palmitoyl cysteine. A lipid anchor (S-diacylglycerol cysteine) is attached at C16.

This sequence belongs to the transglycosylase Slt family.

The protein localises to the cell outer membrane. It catalyses the reaction Endolytic cleavage of the (1-&gt;4)-beta-glycosidic linkage between N-acetylmuramic acid (MurNAc) and N-acetylglucosamine (GlcNAc) residues in peptidoglycan with concomitant formation of a 1,6-anhydrobond in the MurNAc residue.. Murein-degrading enzyme. May play a role in recycling of muropeptides during cell elongation and/or cell division. Preferentially cleaves at a distance of more than two disaccharide units from the ends of the glycan chain. In Klebsiella pneumoniae (strain 342), this protein is Endo-type membrane-bound lytic murein transglycosylase A.